The following is an 85-amino-acid chain: Small ribosomal subunit protein bS20 (85 aa).

The disordered stretch occupies residues Met1–Ala22.

It belongs to the bacterial ribosomal protein bS20 family.

Functionally, binds directly to 16S ribosomal RNA. This is Small ribosomal subunit protein bS20 from Bacillus cytotoxicus (strain DSM 22905 / CIP 110041 / 391-98 / NVH 391-98).